The chain runs to 146 residues: Hemoglobin subunit beta-1/2 (146 aa).

Residue V1 is modified to N-acetylvaline. A Globin domain is found at 2 to 146; it reads HLTPDEKNAV…VATALAHKYH (145 aa). S44 is subject to Phosphoserine. Position 59 is an N6-acetyllysine (K59). Heme b-binding residues include H63 and H92. Residue C93 is modified to S-nitrosocysteine. N6-acetyllysine is present on K144.

It belongs to the globin family. In terms of assembly, heterotetramer of two alpha chains and two beta chains. In terms of tissue distribution, red blood cells.

Involved in oxygen transport from the lung to the various peripheral tissues. This chain is Hemoglobin subunit beta-1/2 (HBB), found in Otolemur crassicaudatus (Brown greater galago).